Here is a 478-residue protein sequence, read N- to C-terminus: MAISSAEGMELQDPKMNGALPGNAVEQEHEGFLPSHSPSPGRKPAQFMDFEGKTSFGMSVFNLSNAIMGSGILGLAYAMAHTGILLFLALLLCIALLSSYSIHLLLTCAGVVGIRAYEQLGQRALGPAGKVVVAAVICLHNVGAMSSYLFIIKSELPLVIATFLDMDPEGDWFLKGNLLIIIVSVLIILPLALMRHLGYLGYTSGLSLTCMLFFLISVIYKKFQLGCTVGHNGTAVESKSSPSLPIHGLNTSCEAQMFTADSQMFYTVPIMAFAFVCHPEVLPIYTELCRPSKRRMQAVANVSIGAMFCMYGLTATFGYLTFYSSVEAEMLHMYSQHDLLILCVRLAVLLAVTLTVPVVLFPIRRALQQLLFPSKAFSWPRHVAIALILLVLVNVLVICVPTIRDIFGVIGSTSAPSLIFILPSIFYLRIVPSEVEPLYSWPKIQALCFGVLGVLFMAISLGFMFANWATGQSHVSGH.

The tract at residues 1–20 is disordered; that stretch reads MAISSAEGMELQDPKMNGAL. Residues 1 to 57 lie on the Cytoplasmic side of the membrane; sequence MAISSAEGMELQDPKMNGALPGNAVEQEHEGFLPSHSPSPGRKPAQFMDFEGKTSFG. The helical transmembrane segment at 58–80 threads the bilayer; it reads MSVFNLSNAIMGSGILGLAYAMA. The Extracellular segment spans residues 81–93; sequence HTGILLFLALLLC. Residues 94 to 114 form a helical membrane-spanning segment; it reads IALLSSYSIHLLLTCAGVVGI. Topologically, residues 115 to 131 are cytoplasmic; sequence RAYEQLGQRALGPAGKV. Residues 132 to 152 form a helical membrane-spanning segment; sequence VVAAVICLHNVGAMSSYLFII. The Extracellular portion of the chain corresponds to 153-172; sequence KSELPLVIATFLDMDPEGDW. A helical membrane pass occupies residues 173 to 193; that stretch reads FLKGNLLIIIVSVLIILPLAL. The Cytoplasmic segment spans residues 194–198; the sequence is MRHLG. Residues 199–219 form a helical membrane-spanning segment; sequence YLGYTSGLSLTCMLFFLISVI. At 220–263 the chain is on the extracellular side; sequence YKKFQLGCTVGHNGTAVESKSSPSLPIHGLNTSCEAQMFTADSQ. An intrachain disulfide couples C227 to C253. N232 is a glycosylation site (N-linked (GlcNAc...) asparagine). The helical transmembrane segment at 264–284 threads the bilayer; that stretch reads MFYTVPIMAFAFVCHPEVLPI. Residues 285–301 lie on the Cytoplasmic side of the membrane; that stretch reads YTELCRPSKRRMQAVAN. Residues 302–322 form a helical membrane-spanning segment; sequence VSIGAMFCMYGLTATFGYLTF. Topologically, residues 323–340 are extracellular; sequence YSSVEAEMLHMYSQHDLL. A helical transmembrane segment spans residues 341–361; the sequence is ILCVRLAVLLAVTLTVPVVLF. Over 362 to 382 the chain is Cytoplasmic; that stretch reads PIRRALQQLLFPSKAFSWPRH. Residues 383–403 traverse the membrane as a helical segment; the sequence is VAIALILLVLVNVLVICVPTI. At 404 to 405 the chain is on the extracellular side; that stretch reads RD. The helical transmembrane segment at 406 to 426 threads the bilayer; it reads IFGVIGSTSAPSLIFILPSIF. Topologically, residues 427-445 are cytoplasmic; sequence YLRIVPSEVEPLYSWPKIQ. Residues 446–466 traverse the membrane as a helical segment; the sequence is ALCFGVLGVLFMAISLGFMFA. Residues 467 to 478 are Extracellular-facing; sequence NWATGQSHVSGH.

This sequence belongs to the amino acid/polyamine transporter 2 family.

It is found in the cell membrane. The catalysed reaction is L-serine(out) + Na(+)(out) + H(+)(in) = L-serine(in) + Na(+)(in) + H(+)(out). The enzyme catalyses L-alanine(out) + Na(+)(out) + H(+)(in) = L-alanine(in) + Na(+)(in) + H(+)(out). It carries out the reaction glycine(out) + Na(+)(out) + H(+)(in) = glycine(in) + Na(+)(in) + H(+)(out). It catalyses the reaction L-glutamine(out) + Na(+)(out) + H(+)(in) = L-glutamine(in) + Na(+)(in) + H(+)(out). The catalysed reaction is L-asparagine(out) + Na(+)(out) + H(+)(in) = L-asparagine(in) + Na(+)(in) + H(+)(out). The enzyme catalyses L-histidine(out) + Na(+)(out) + H(+)(in) = L-histidine(in) + Na(+)(in) + H(+)(out). It carries out the reaction L-cysteine(out) + Na(+)(out) + H(+)(in) = L-cysteine(in) + Na(+)(in) + H(+)(out). Not inhibited by lithium. Partial allosteric regulation on ions sodium binding. In terms of biological role, symporter that cotransports neutral amino acids and sodium ions, coupled to an H(+) antiporter activity. Releases L-glutamine and glycine from astroglial cells and may participate in the glutamate/GABA-glutamine cycle and the NMDA receptors activation. In addition contributes significantly to L-glutamine uptake in retina, namely in ganglion and Mueller cells and, therefore participates in the retinal glutamate-glutamine cycle. The transport activity is pH sensitive, Li(+) tolerant, bidirectional and associated with large uncoupled fluxes of protons. The transport is electroneutral coupled to the cotransport of 1 Na(+) and the antiport of 1 H(+). May have particular importance for modulation of net hepatic glutamine flux. This Bos taurus (Bovine) protein is Sodium-coupled neutral amino acid transporter 5.